Here is a 607-residue protein sequence, read N- to C-terminus: Pyruvate decarboxylase 2 (607 aa).

Residues 1–22 (MDTKIGSIDACNPTNHDIGGPP) are disordered. Positions 69 and 156 each coordinate substrate. Residues 434–516 (DSWFNCQKLK…FLINNGGYTI (83 aa)) form a thiamine pyrophosphate binding region. Residues Asp-484, Asn-511, and Gly-513 each coordinate Mg(2+). Glu-517 is a binding site for substrate.

It belongs to the TPP enzyme family. Homotetramer. Requires a metal cation as cofactor. Thiamine diphosphate is required as a cofactor. Expressed at low levels in roots, shoots, flowers, siliques and seeds.

It catalyses the reaction a 2-oxocarboxylate + H(+) = an aldehyde + CO2. The polypeptide is Pyruvate decarboxylase 2 (PDC2) (Arabidopsis thaliana (Mouse-ear cress)).